Here is a 1002-residue protein sequence, read N- to C-terminus: TOG array regulator of axonemal microtubules protein 2 (1002 aa).

Disordered regions lie at residues 54-74 (SSVL…EDQS), 131-214 (KRRL…SAQE), 332-351 (ETRS…KVQV), 402-421 (PLRG…PRRN), and 426-450 (LQRK…GFAR).

Belongs to the Crescerin family.

This is TOG array regulator of axonemal microtubules protein 2 (Togaram2) from Mus musculus (Mouse).